The chain runs to 120 residues: NAD(P)H-quinone oxidoreductase subunit 3 (120 aa).

The next 3 membrane-spanning stretches (helical) occupy residues 6–26, 64–84, and 89–109; these read GYDA…LALV, MFAL…PWAV, and LGLL…VALA.

The protein belongs to the complex I subunit 3 family. As to quaternary structure, NDH-1 can be composed of about 15 different subunits; different subcomplexes with different compositions have been identified which probably have different functions.

The protein resides in the cellular thylakoid membrane. The catalysed reaction is a plastoquinone + NADH + (n+1) H(+)(in) = a plastoquinol + NAD(+) + n H(+)(out). The enzyme catalyses a plastoquinone + NADPH + (n+1) H(+)(in) = a plastoquinol + NADP(+) + n H(+)(out). Functionally, NDH-1 shuttles electrons from an unknown electron donor, via FMN and iron-sulfur (Fe-S) centers, to quinones in the respiratory and/or the photosynthetic chain. The immediate electron acceptor for the enzyme in this species is believed to be plastoquinone. Couples the redox reaction to proton translocation, and thus conserves the redox energy in a proton gradient. Cyanobacterial NDH-1 also plays a role in inorganic carbon-concentration. The sequence is that of NAD(P)H-quinone oxidoreductase subunit 3 from Synechococcus sp. (strain CC9605).